A 326-amino-acid chain; its full sequence is GTP 3',8-cyclase (326 aa).

Positions Lys-4 to Asn-227 constitute a Radical SAM core domain. Arg-13 is a binding site for GTP. [4Fe-4S] cluster-binding residues include Cys-20 and Cys-24. Tyr-26 is a binding site for S-adenosyl-L-methionine. Cys-27 contributes to the [4Fe-4S] cluster binding site. Arg-63 serves as a coordination point for GTP. Gly-67 provides a ligand contact to S-adenosyl-L-methionine. GTP is bound at residue Thr-94. S-adenosyl-L-methionine is bound at residue Ser-118. Residue Lys-155 participates in GTP binding. Position 189 (Met-189) interacts with S-adenosyl-L-methionine. Residues Cys-253 and Cys-256 each contribute to the [4Fe-4S] cluster site. Arg-258–Arg-260 is a GTP binding site. Cys-270 contributes to the [4Fe-4S] cluster binding site.

Belongs to the radical SAM superfamily. MoaA family. Monomer and homodimer. The cofactor is [4Fe-4S] cluster.

It carries out the reaction GTP + AH2 + S-adenosyl-L-methionine = (8S)-3',8-cyclo-7,8-dihydroguanosine 5'-triphosphate + 5'-deoxyadenosine + L-methionine + A + H(+). The protein operates within cofactor biosynthesis; molybdopterin biosynthesis. Catalyzes the cyclization of GTP to (8S)-3',8-cyclo-7,8-dihydroguanosine 5'-triphosphate. This chain is GTP 3',8-cyclase, found in Syntrophomonas wolfei subsp. wolfei (strain DSM 2245B / Goettingen).